Here is a 181-residue protein sequence, read N- to C-terminus: Large ribosomal subunit protein uL6 (181 aa).

This sequence belongs to the universal ribosomal protein uL6 family. In terms of assembly, part of the 50S ribosomal subunit.

Its function is as follows. This protein binds to the 23S rRNA, and is important in its secondary structure. It is located near the subunit interface in the base of the L7/L12 stalk, and near the tRNA binding site of the peptidyltransferase center. The chain is Large ribosomal subunit protein uL6 from Flavobacterium psychrophilum (strain ATCC 49511 / DSM 21280 / CIP 103535 / JIP02/86).